A 160-amino-acid polypeptide reads, in one-letter code: Large ribosomal subunit protein uL15 (160 aa).

Residues 1-13 (MKLNEIRDNEGAR) show a composition bias toward basic and acidic residues. Residues 1–41 (MKLNEIRDNEGARKSRIRVGRGIGSGKGKTGGRGVKGQKSR) form a disordered region. The span at 21 to 35 (RGIGSGKGKTGGRGV) shows a compositional bias: gly residues.

This sequence belongs to the universal ribosomal protein uL15 family. Part of the 50S ribosomal subunit.

Its function is as follows. Binds to the 23S rRNA. The sequence is that of Large ribosomal subunit protein uL15 from Parvibaculum lavamentivorans (strain DS-1 / DSM 13023 / NCIMB 13966).